We begin with the raw amino-acid sequence, 181 residues long: Anthrone oxygenase encC (181 aa).

The next 4 membrane-spanning stretches (helical) occupy residues 1–21 (MASV…WLSG), 65–81 (QIAA…AWCA), 88–108 (LLYG…LLFM), and 153–173 (FLAG…LFAA).

This sequence belongs to the anthrone oxygenase family. In terms of tissue distribution, endocrocin is specifically produced in conidia.

It is found in the membrane. In terms of biological role, anthrone oxygenase; part of the gene cluster that mediates the biosynthesis of endocrocin, a simple anthraquinone interesting for many biotechnological applications. The pathway begins with the synthesis of atrochrysone thioester by the polyketide synthase (PKS) encA. The atrochrysone carboxyl ACP thioesterase encB then breaks the thioester bond and releases the atrochrysone carboxylic acid from encA. The atrochrysone carboxylic acid is then converted to endocrocin anthrone which is further oxidized into endocrocin by the anthrone oxygenase encC. The exact function of encD has not been identified yet, but it negatively regulates endocrocin production, likely through the modification of endocrocin itself. This is Anthrone oxygenase encC from Aspergillus fumigatus (strain ATCC MYA-4609 / CBS 101355 / FGSC A1100 / Af293) (Neosartorya fumigata).